A 450-amino-acid polypeptide reads, in one-letter code: RUN domain-containing protein 3B (450 aa).

Residues 48–180 (DDTSAEFINF…IDFSFCLKGE (133 aa)) enclose the RUN domain. The tract at residues 203 to 225 (DSISSDEEEMRTLGSSGSEAGTP) is disordered. Residues 291–317 (ISHKLEKEQLEIIILELQDQLTVLKNH) adopt a coiled-coil conformation.

This sequence belongs to the RUNDC3 family.

The chain is RUN domain-containing protein 3B (rundc3b) from Danio rerio (Zebrafish).